An 88-amino-acid polypeptide reads, in one-letter code: Small ribosomal subunit protein bS20 (88 aa).

The segment covering 1 to 22 has biased composition (basic residues); sequence MANIKSSKKRSIQSEKKRKYNS. A disordered region spans residues 1 to 26; the sequence is MANIKSSKKRSIQSEKKRKYNSSKKS.

This sequence belongs to the bacterial ribosomal protein bS20 family.

Its function is as follows. Binds directly to 16S ribosomal RNA. The polypeptide is Small ribosomal subunit protein bS20 (Wigglesworthia glossinidia brevipalpis).